We begin with the raw amino-acid sequence, 1030 residues long: MAGTDPRNRELSLMDKQISSLLEICLNSNLYSINLHCNQISKIEGLRHLCYLQHLDLSSNLITKIEGLDSLASLQSLNLSCNKLTRVEGLEKLFNLKKLNLSYNSIQDLTGLIPLHGWNHKLSHLYLHSNCINSIDEVLQSTVGLNCLLHLTLEQNAKGNPVCHALGYREIILENLPQLNSLDGLDRSGDPVTAHEVDSMDLANLDFLEYLITFDSGRKEVKESLTGPVKTARIDEVLTKYRKHRDSSEAINLNTDGTSSSEHDVVRFQDNSNMLREMRIKKLEDQISELLVKASCPKSEQTKLKAKRDTDITTESDSESTKENRKGSTTKRTPGCHKTSQTSKQQANQQLKGRTSYSELKQNVSRKQSLSKRKTDIETSLSSGRTDTDSTGQILGKPHAIGGSLKKKGELVRNSIEESTYRALVQELDQERERRWKAEQVVLKLTENIKELQSQAKEEKGINSMAVYTTDRIKELLLKEKNAKSKLQELIHHLREENEKLMDELKKLKCKEEDYQKAYKSMEDTLAKLETQNIQKQALEMKQVQETERKVSASQREIDLLRVALRQQKEKVNQLHEVLTSKEQLHRKELESRVALNGPEFQYALAQEMAKEEHHHSQQIHSFQEKINLLTQQYADLEDEFRAALIIEAERFKEVKDGFDNVASELAEHKETVHRCRQKEKQSATLMQELTTMVKEQKARIAEITKAKQEIISDLKSKIHSLEKVAEEGRQKTVQTELLKKEKSKLISQLTAQESLIDGLKAERKIWGQELTQQGVSLAQDRGRLEAKIEVLSNEIESLKKQNERDADALRIKTKIVDDQTETIRKLKEGLQERDERIRKLREENIELEKVLQEQSDERTAQLEELKQKLERQTERKEEVKQLLEEKEAELEDVKKAYSAMNKKWQDKAELLSHLETQVRQMKENFDAKENKLIEERDKSLQCQKVITEKLRSVDDAFRRQLESVLSAHQAELIKLASDKQKEIEAANERVYQVEEEMRHLLKETANSKKIMEEKIKRLTGALSDIQKEF.

6 LRR repeats span residues Arg-7–Ser-28, Asn-29–Cys-50, Tyr-51–Ala-72, Ser-73–Phe-94, Asn-95–His-116, and Lys-121–Thr-142. One can recognise an LRRCT domain in the interval Asn-160–Met-200. The segment at Lys-298–Ile-401 is disordered. Residues Glu-300 to Asp-311 are compositionally biased toward basic and acidic residues. Composition is skewed to polar residues over residues Lys-338 to Gln-368 and Glu-378 to Gln-393. Positions Arg-432–Leu-645 form a coiled coil.

Belongs to the LRRCC1 family.

The protein resides in the cytoplasm. It is found in the cytoskeleton. It localises to the microtubule organizing center. The protein localises to the centrosome. Its subcellular location is the centriole. Required for the organization of the mitotic spindle. Maintains the structural integrity of centrosomes during mitosis. The chain is Leucine-rich repeat and coiled-coil domain-containing protein 1 (lrrcc1) from Xenopus laevis (African clawed frog).